The chain runs to 607 residues: Elongation factor 4 (607 aa).

The tr-type G domain occupies 11–193 (ENIRNFSIIA…KIVDVVPAPD (183 aa)). GTP contacts are provided by residues 23–28 (DHGKST) and 140–143 (NKID).

It belongs to the TRAFAC class translation factor GTPase superfamily. Classic translation factor GTPase family. LepA subfamily.

Its subcellular location is the cell membrane. It catalyses the reaction GTP + H2O = GDP + phosphate + H(+). Required for accurate and efficient protein synthesis under certain stress conditions. May act as a fidelity factor of the translation reaction, by catalyzing a one-codon backward translocation of tRNAs on improperly translocated ribosomes. Back-translocation proceeds from a post-translocation (POST) complex to a pre-translocation (PRE) complex, thus giving elongation factor G a second chance to translocate the tRNAs correctly. Binds to ribosomes in a GTP-dependent manner. The polypeptide is Elongation factor 4 (Staphylococcus epidermidis (strain ATCC 35984 / DSM 28319 / BCRC 17069 / CCUG 31568 / BM 3577 / RP62A)).